The following is a 210-amino-acid chain: Large ribosomal subunit protein bL25 (210 aa).

It belongs to the bacterial ribosomal protein bL25 family. CTC subfamily. In terms of assembly, part of the 50S ribosomal subunit; part of the 5S rRNA/L5/L18/L25 subcomplex. Contacts the 5S rRNA. Binds to the 5S rRNA independently of L5 and L18.

This is one of the proteins that binds to the 5S RNA in the ribosome where it forms part of the central protuberance. The polypeptide is Large ribosomal subunit protein bL25 (Saccharophagus degradans (strain 2-40 / ATCC 43961 / DSM 17024)).